The primary structure comprises 96 residues: Putative pterin-4-alpha-carbinolamine dehydratase (96 aa).

It belongs to the pterin-4-alpha-carbinolamine dehydratase family.

It catalyses the reaction (4aS,6R)-4a-hydroxy-L-erythro-5,6,7,8-tetrahydrobiopterin = (6R)-L-erythro-6,7-dihydrobiopterin + H2O. The sequence is that of Putative pterin-4-alpha-carbinolamine dehydratase from Metallosphaera sedula (strain ATCC 51363 / DSM 5348 / JCM 9185 / NBRC 15509 / TH2).